The chain runs to 363 residues: Chorismate synthase (363 aa).

Arg48 lines the NADP(+) pocket. FMN contacts are provided by residues 125–127 (RSS), 238–239 (NA), Gly278, 293–297 (KPTAS), and Arg319.

The protein belongs to the chorismate synthase family. As to quaternary structure, homotetramer. It depends on FMNH2 as a cofactor.

The catalysed reaction is 5-O-(1-carboxyvinyl)-3-phosphoshikimate = chorismate + phosphate. The protein operates within metabolic intermediate biosynthesis; chorismate biosynthesis; chorismate from D-erythrose 4-phosphate and phosphoenolpyruvate: step 7/7. Its function is as follows. Catalyzes the anti-1,4-elimination of the C-3 phosphate and the C-6 proR hydrogen from 5-enolpyruvylshikimate-3-phosphate (EPSP) to yield chorismate, which is the branch point compound that serves as the starting substrate for the three terminal pathways of aromatic amino acid biosynthesis. This reaction introduces a second double bond into the aromatic ring system. The polypeptide is Chorismate synthase (Acinetobacter baylyi (strain ATCC 33305 / BD413 / ADP1)).